A 568-amino-acid chain; its full sequence is CDK5 and ABL1 enzyme substrate 1 (568 aa).

Residues 1–31 (MAAATATAGTAACSSSSSSRGGSTDAAATSG) show a composition bias toward low complexity. 2 disordered regions span residues 1 to 94 (MAAA…PGAR) and 130 to 169 (PSLV…QEEL). An interaction with TDRD7 region spans residues 1 to 98 (MAAATATAGT…TKPGARARLS (98 aa)). Pro residues predominate over residues 33-45 (QPPPPPPATAPPE). The span at 46–56 (PLRKPRMDPRR) shows a compositional bias: basic and acidic residues. Residues 140–427 (PSQPPRSAPA…TTVIDYVKPS (288 aa)) are interaction with CDK3. The residue at position 248 (S248) is a Phosphoserine. Residue S274 is modified to Phosphoserine; by CDK2 and CDK3. A Phosphothreonine modification is found at T350.

This sequence belongs to the cyclin family. In terms of assembly, found in a complex with p53/TP53. Found in a number of complexes with CDK2, CDK3, CDK5, ABL1, TDRD7, CDK17, CCNA1, CCNE1 and TP73. Interacts with CDK2, CDK3, CDK5, ABL1 and TDRD7. In terms of processing, phosphorylated on Ser-274 by CCNE1/CDK3. Phosphorylated on serine/threonine residues by CDK5 and on tyrosine residues by ABL1. Also phosphorylated in vitro by CCNA1/CDK2, CCNE1/CDK2, CCNA1/CDK3 and CCNE1/CDK3. Ubiquitous. Expressed in postnatal day 1 (P1), in postmitotic neurons of the subplate, cortex (V/VI) and marginal zone; in postnatal day 7 (P7), in all layers of the cerebral cortex and in the CA1 and CA2 regions of the hippocampus (at protein level). Highly expressed in brain, kidney, liver and lung.

It is found in the nucleus. Its subcellular location is the cytoplasm. The protein localises to the cell projection. The protein resides in the growth cone. Cyclin-dependent kinase binding protein. Enhances cyclin-dependent kinase tyrosine phosphorylation by nonreceptor tyrosine kinases, such as that of CDK5 by activated ABL1, which leads to increased CDK5 activity and is critical for neuronal development, and that of CDK2 by WEE1, which leads to decreased CDK2 activity and growth inhibition. Positively affects neuronal outgrowth. Plays a role as a regulator for p53/p73-induced cell death. The protein is CDK5 and ABL1 enzyme substrate 1 (Cables1) of Mus musculus (Mouse).